The sequence spans 466 residues: Fumarate hydratase class II (466 aa).

Residues 100 to 102 (SGT), R128, 131 to 134 (HPND), 141 to 143 (STN), and T189 contribute to the substrate site. H190 (proton donor/acceptor) is an active-site residue. S320 is an active-site residue. Residues S321 and 326 to 328 (KVN) contribute to the substrate site.

It belongs to the class-II fumarase/aspartase family. Fumarase subfamily. Homotetramer.

The protein resides in the cytoplasm. The enzyme catalyses (S)-malate = fumarate + H2O. The protein operates within carbohydrate metabolism; tricarboxylic acid cycle; (S)-malate from fumarate: step 1/1. Involved in the TCA cycle. Catalyzes the stereospecific interconversion of fumarate to L-malate. This chain is Fumarate hydratase class II, found in Prochlorococcus marinus (strain MIT 9313).